Reading from the N-terminus, the 456-residue chain is Bifunctional protein GlmU (456 aa).

The segment at 1–229 (MLNNAMSVVI…LSEVEGVNNR (229 aa)) is pyrophosphorylase. Residues 11–14 (LAAG), Lys25, Gln76, 81–82 (GT), 103–105 (YGD), Gly140, Glu154, Asn169, and Asn227 each bind UDP-N-acetyl-alpha-D-glucosamine. Asp105 serves as a coordination point for Mg(2+). Asn227 contacts Mg(2+). Residues 230–250 (LQLSRLERVYQSEQAEKLLLA) form a linker region. Positions 251–456 (GVMLRDPARF…EGWRRPVKKK (206 aa)) are N-acetyltransferase. Arg333 and Lys351 together coordinate UDP-N-acetyl-alpha-D-glucosamine. His363 functions as the Proton acceptor in the catalytic mechanism. UDP-N-acetyl-alpha-D-glucosamine contacts are provided by Tyr366 and Asn377. Residues Ala380, 386 to 387 (NY), Ser405, Ala423, and Arg440 contribute to the acetyl-CoA site.

In the N-terminal section; belongs to the N-acetylglucosamine-1-phosphate uridyltransferase family. The protein in the C-terminal section; belongs to the transferase hexapeptide repeat family. Homotrimer. Requires Mg(2+) as cofactor.

The protein resides in the cytoplasm. It carries out the reaction alpha-D-glucosamine 1-phosphate + acetyl-CoA = N-acetyl-alpha-D-glucosamine 1-phosphate + CoA + H(+). It catalyses the reaction N-acetyl-alpha-D-glucosamine 1-phosphate + UTP + H(+) = UDP-N-acetyl-alpha-D-glucosamine + diphosphate. It functions in the pathway nucleotide-sugar biosynthesis; UDP-N-acetyl-alpha-D-glucosamine biosynthesis; N-acetyl-alpha-D-glucosamine 1-phosphate from alpha-D-glucosamine 6-phosphate (route II): step 2/2. It participates in nucleotide-sugar biosynthesis; UDP-N-acetyl-alpha-D-glucosamine biosynthesis; UDP-N-acetyl-alpha-D-glucosamine from N-acetyl-alpha-D-glucosamine 1-phosphate: step 1/1. The protein operates within bacterial outer membrane biogenesis; LPS lipid A biosynthesis. In terms of biological role, catalyzes the last two sequential reactions in the de novo biosynthetic pathway for UDP-N-acetylglucosamine (UDP-GlcNAc). The C-terminal domain catalyzes the transfer of acetyl group from acetyl coenzyme A to glucosamine-1-phosphate (GlcN-1-P) to produce N-acetylglucosamine-1-phosphate (GlcNAc-1-P), which is converted into UDP-GlcNAc by the transfer of uridine 5-monophosphate (from uridine 5-triphosphate), a reaction catalyzed by the N-terminal domain. The polypeptide is Bifunctional protein GlmU (Escherichia coli O127:H6 (strain E2348/69 / EPEC)).